The sequence spans 244 residues: tRNA (guanine-N(1)-)-methyltransferase (244 aa).

S-adenosyl-L-methionine-binding positions include glycine 123 and leucine 143–methionine 148.

It belongs to the RNA methyltransferase TrmD family. In terms of assembly, homodimer.

It localises to the cytoplasm. It carries out the reaction guanosine(37) in tRNA + S-adenosyl-L-methionine = N(1)-methylguanosine(37) in tRNA + S-adenosyl-L-homocysteine + H(+). In terms of biological role, specifically methylates guanosine-37 in various tRNAs. The polypeptide is tRNA (guanine-N(1)-)-methyltransferase (Ruegeria sp. (strain TM1040) (Silicibacter sp.)).